The sequence spans 140 residues: Class I hydrophobin B (140 aa).

Positions 1 to 16 (MKFLAVVSLLAATALA) are cleaved as a signal peptide. Disulfide bonds link C42–C113, C50–C107, C51–C88, and C114–C133. A glycan (N-linked (GlcNAc...) asparagine) is linked at N117.

It belongs to the fungal hydrophobin family. Self-assembles to form functional amyloid fibrils called rodlets. Self-assembly into fibrillar rodlets occurs spontaneously at hydrophobic:hydrophilic interfaces and the rodlets further associate laterally to form amphipathic monolayers.

The protein resides in the secreted. It is found in the spore wall. Aerial growth, conidiation, and dispersal of filamentous fungi in the environment rely upon a capability of their secreting small amphipathic proteins called hydrophobins (HPBs) with low sequence identity. Class I can self-assemble into an outermost layer of rodlet bundles on aerial cell surfaces, conferring cellular hydrophobicity that supports fungal growth, development and dispersal; whereas Class II form highly ordered films at water-air interfaces through intermolecular interactions but contribute nothing to the rodlet structure. RodB is a class I hydrophobin that, unlike rodA, is not required for rodlet formation. The protein is Class I hydrophobin B of Aspergillus fumigatus (strain ATCC MYA-4609 / CBS 101355 / FGSC A1100 / Af293) (Neosartorya fumigata).